A 313-amino-acid chain; its full sequence is MLKMESTQQMASSIINTSFEAAVVAATSTLELMGIQYDYNEVYTRVKSKFDYVMDDSGVKNNLLGKAATIDQALNGKFGSAVRNRNWMTDTRTTARLDEDVNKLRMMLSSKGIDQKMRVLNACFSVKRIPGKSSSIIKCTRLMRDKIERGEVEVDDSFVEEKMEVDTIDWKSRYEQLEKRFESLKQRVNEKYTSWVQKAKKVNENMYSLQNVISQQQSQIADLQHYCNKLEVDLQNKISSLVSSIEWYMKSMELPDEVKTDIEQQLNSIDVINPINAIDDFESLIRNVILDYDRTFLMFKGLMRQCNYEYTYE.

The tract at residues methionine 1–arginine 149 is RNA-binding. The tract at residues glycine 150–methionine 206 is dimerization. Residues aspartate 166–lysine 237 are a coiled coil. The interaction with host ZC3H7B stretch occupies residues tryptophan 170–leucine 234. The segment at serine 208–glutamate 313 is interaction with host EIF4G1.

Belongs to the rotavirus NSP3 family. In terms of assembly, homodimer. Interacts (via the coiled-coil region) with host ZC3H7B (via LD motif). Interacts with host EIF4G1.

The protein resides in the host cytoplasm. Its function is as follows. Plays an important role in stimulating the translation of viral mRNAs. These mRNAs are capped but not polyadenylated, instead terminating in a conserved sequence 'GACC' at the 3' that is recognized by NSP3, which competes with host PABPC1 for EIF4G1 binding. The interaction between NSP3 and host EIF4G1 stabilizes the EIF4E-EIF4G1 interaction, thereby facilitating the initiation of capped mRNA translation. This chain is Non-structural protein 3, found in Rotavirus A (isolate RVA/Human/Belgium/B4106/2000/G3P11[14]) (RV-A).